The following is a 209-amino-acid chain: MSNVHLVDHPLVQHKLTLMRRKDASTNSFRRLLNEISMLMAYEVTRDMPMQDIEVETPLETMQAKVIDGKKLVLVSILRAGTGILDGMLTVVPGARVGHIGLYRDPKTLTAVEYYFKMPGEMENRDVIVVDPMLATGNSAVAAVERLKELNPKSIKFVCLLTCPEGLATMQKAHPDVPVYTAAIDRELNSHGYILPGLGDAGDRIFGTK.

Residues arginine 79, arginine 104, and 131 to 139 (DPMLATGNS) each bind 5-phospho-alpha-D-ribose 1-diphosphate. Residues isoleucine 194 and 199 to 201 (GDA) contribute to the uracil site. A 5-phospho-alpha-D-ribose 1-diphosphate-binding site is contributed by aspartate 200.

The protein belongs to the UPRTase family. Requires Mg(2+) as cofactor.

It carries out the reaction UMP + diphosphate = 5-phospho-alpha-D-ribose 1-diphosphate + uracil. The protein operates within pyrimidine metabolism; UMP biosynthesis via salvage pathway; UMP from uracil: step 1/1. With respect to regulation, allosterically activated by GTP. Functionally, catalyzes the conversion of uracil and 5-phospho-alpha-D-ribose 1-diphosphate (PRPP) to UMP and diphosphate. This chain is Uracil phosphoribosyltransferase, found in Variovorax paradoxus (strain S110).